Here is a 232-residue protein sequence, read N- to C-terminus: Small ribosomal subunit protein uS3 (232 aa).

The KH type-2 domain occupies 39–107 (IRAFLKKKLY…EVNVNIKEER (69 aa)). The interval 211–232 (GVQPEKTEEEAPKKTRRARRGK) is disordered. Positions 213–223 (QPEKTEEEAPK) are enriched in basic and acidic residues.

It belongs to the universal ribosomal protein uS3 family. Part of the 30S ribosomal subunit. Forms a tight complex with proteins S10 and S14.

Binds the lower part of the 30S subunit head. Binds mRNA in the 70S ribosome, positioning it for translation. This Campylobacter concisus (strain 13826) protein is Small ribosomal subunit protein uS3.